Reading from the N-terminus, the 491-residue chain is ATP-dependent protease ATPase subunit HslU (491 aa).

ATP contacts are provided by residues isoleucine 34, 76–81 (GVGKTE), aspartate 296, glutamate 364, and arginine 436.

It belongs to the ClpX chaperone family. HslU subfamily. As to quaternary structure, a double ring-shaped homohexamer of HslV is capped on each side by a ring-shaped HslU homohexamer. The assembly of the HslU/HslV complex is dependent on binding of ATP.

It is found in the cytoplasm. ATPase subunit of a proteasome-like degradation complex; this subunit has chaperone activity. The binding of ATP and its subsequent hydrolysis by HslU are essential for unfolding of protein substrates subsequently hydrolyzed by HslV. HslU recognizes the N-terminal part of its protein substrates and unfolds these before they are guided to HslV for hydrolysis. This chain is ATP-dependent protease ATPase subunit HslU, found in Chlorobaculum tepidum (strain ATCC 49652 / DSM 12025 / NBRC 103806 / TLS) (Chlorobium tepidum).